Consider the following 94-residue polypeptide: MTKSELIERLATQQSHIPAKVVEDAVKEMLEHMASTLAQGERIEIRGFGSFSLHYRAPRTGRNPKTGDKVELEGKYVPHFKPGKELRDRANIYG.

The protein belongs to the bacterial histone-like protein family. As to quaternary structure, heterodimer of an alpha and a beta chain.

Functionally, this protein is one of the two subunits of integration host factor, a specific DNA-binding protein that functions in genetic recombination as well as in transcriptional and translational control. This chain is Integration host factor subunit beta, found in Escherichia fergusonii (strain ATCC 35469 / DSM 13698 / CCUG 18766 / IAM 14443 / JCM 21226 / LMG 7866 / NBRC 102419 / NCTC 12128 / CDC 0568-73).